The primary structure comprises 514 residues: ATP synthase subunit alpha (514 aa).

Residue 170 to 177 coordinates ATP; that stretch reads GDRQTGKT.

This sequence belongs to the ATPase alpha/beta chains family. F-type ATPases have 2 components, CF(1) - the catalytic core - and CF(0) - the membrane proton channel. CF(1) has five subunits: alpha(3), beta(3), gamma(1), delta(1), epsilon(1). CF(0) has three main subunits: a(1), b(2) and c(9-12). The alpha and beta chains form an alternating ring which encloses part of the gamma chain. CF(1) is attached to CF(0) by a central stalk formed by the gamma and epsilon chains, while a peripheral stalk is formed by the delta and b chains.

Its subcellular location is the cell inner membrane. It carries out the reaction ATP + H2O + 4 H(+)(in) = ADP + phosphate + 5 H(+)(out). Functionally, produces ATP from ADP in the presence of a proton gradient across the membrane. The alpha chain is a regulatory subunit. The protein is ATP synthase subunit alpha of Psychrobacter arcticus (strain DSM 17307 / VKM B-2377 / 273-4).